Reading from the N-terminus, the 214-residue chain is Orotate phosphoribosyltransferase (214 aa).

Lysine 26 contributes to the 5-phospho-alpha-D-ribose 1-diphosphate binding site. 34-35 provides a ligand contact to orotate; that stretch reads FF. Residues 72–73, arginine 99, lysine 100, lysine 103, histidine 105, and 124–132 each bind 5-phospho-alpha-D-ribose 1-diphosphate; these read YK and DDVITAGTA. Orotate-binding residues include threonine 128 and arginine 156.

Belongs to the purine/pyrimidine phosphoribosyltransferase family. PyrE subfamily. Homodimer. Mg(2+) serves as cofactor.

The catalysed reaction is orotidine 5'-phosphate + diphosphate = orotate + 5-phospho-alpha-D-ribose 1-diphosphate. It functions in the pathway pyrimidine metabolism; UMP biosynthesis via de novo pathway; UMP from orotate: step 1/2. Catalyzes the transfer of a ribosyl phosphate group from 5-phosphoribose 1-diphosphate to orotate, leading to the formation of orotidine monophosphate (OMP). The chain is Orotate phosphoribosyltransferase from Actinobacillus succinogenes (strain ATCC 55618 / DSM 22257 / CCUG 43843 / 130Z).